A 478-amino-acid chain; its full sequence is Transposase for insertion sequence element IS231C (478 aa).

It belongs to the transposase 11 family.

In terms of biological role, involved in the transposition of the insertion sequence. The sequence is that of Transposase for insertion sequence element IS231C from Bacillus thuringiensis subsp. berliner.